We begin with the raw amino-acid sequence, 414 residues long: MIOREX complex component 10 (414 aa).

A mitochondrion-targeting transit peptide spans 1-29 (MLSFRSLTSTFGFVSRFQIRRLGTSLSIQ). Residues 30 to 373 (NLEVQDGRWK…ISLLNERNST (344 aa)) lie on the Mitochondrial matrix side of the membrane. A helical transmembrane segment spans residues 374-394 (FLEWIIIYLIAFELCFEIYHF). Residues 395 to 414 (YQKYSSYCSEPTNDDLDATK) lie on the Mitochondrial intermembrane side of the membrane.

Belongs to the RMD1/sif2 family. In terms of assembly, associates with the mitochondrial ribosome.

Its subcellular location is the mitochondrion inner membrane. Component of MIOREX complexes, large expressome-like assemblies of ribosomes with factors involved in all the steps of post-transcriptional gene expression. This chain is MIOREX complex component 10, found in Saccharomyces cerevisiae (strain ATCC 204508 / S288c) (Baker's yeast).